The sequence spans 377 residues: Alanine racemase (377 aa).

Catalysis depends on Lys-37, which acts as the Proton acceptor; specific for D-alanine. Lys-37 is modified (N6-(pyridoxal phosphate)lysine). Position 135 (Arg-135) interacts with substrate. Tyr-271 functions as the Proton acceptor; specific for L-alanine in the catalytic mechanism. Residue Met-319 participates in substrate binding.

The protein belongs to the alanine racemase family. Requires pyridoxal 5'-phosphate as cofactor.

It catalyses the reaction L-alanine = D-alanine. The protein operates within amino-acid biosynthesis; D-alanine biosynthesis; D-alanine from L-alanine: step 1/1. Functionally, catalyzes the interconversion of L-alanine and D-alanine. May also act on other amino acids. In Helicobacter pylori (strain G27), this protein is Alanine racemase (alr).